We begin with the raw amino-acid sequence, 1194 residues long: Immunoglobulin superfamily member 3 (1194 aa).

Residues 1 to 19 (MKCFFPVLSCLAVLGVVSA) form the signal peptide. Ig-like C2-type domains follow at residues 20–138 (QRQV…AKMN), 143–262 (PDSL…WYAM), 276–386 (PTDK…KTVT), 401–539 (PIIV…ISIT), 545–661 (FAVT…WTRL), 676–803 (PVTK…EEVS), 813–945 (PDSR…TALT), and 949–1097 (PDAS…YRLT). Over 20–1124 (QRQVTVQEGP…LQSIICSNDA (1105 aa)) the chain is Extracellular. Cystine bridges form between Cys-42-Cys-120 and Cys-167-Cys-246. Asn-43 carries an N-linked (GlcNAc...) asparagine glycan. An EWI motif motif is present at residues 250–252 (EWI). A disulfide bond links Cys-302 and Cys-376. The N-linked (GlcNAc...) asparagine glycan is linked to Asn-418. Cystine bridges form between Cys-432/Cys-511 and Cys-566/Cys-645. An N-linked (GlcNAc...) asparagine glycan is attached at Asn-655. 3 cysteine pairs are disulfide-bonded: Cys-701-Cys-782, Cys-838-Cys-918, and Cys-974-Cys-1080. N-linked (GlcNAc...) asparagine glycosylation is present at Asn-842. Residues 997–1033 (AGGKRSSPGLEEQEEEREEEEEEDDDDDDDPTERTAL) are disordered. The span at 1007-1027 (EEQEEEREEEEEEDDDDDDDP) shows a compositional bias: acidic residues. Residue Asn-1077 is glycosylated (N-linked (GlcNAc...) asparagine). A helical transmembrane segment spans residues 1125–1145 (LFYFVFFYPFPIFGILIITIL). Topologically, residues 1146–1194 (LVRFKSRNSSKNSDGKNGVPLLWIKEPHLNYSPTCLEPPVLSIHPGAID) are cytoplasmic.

In terms of tissue distribution, expressed in a wide range of tissues with High expression in Placenta, kidney and lung.

It is found in the membrane. This chain is Immunoglobulin superfamily member 3 (IGSF3), found in Homo sapiens (Human).